The following is a 147-amino-acid chain: Hemoglobin subunit gamma (147 aa).

In terms of domain architecture, Globin spans 3 to 147 (HFTAEEKAII…VAIALGHKYH (145 aa)). Heme b contacts are provided by histidine 64 and histidine 93.

It belongs to the globin family. As to quaternary structure, heterotetramer of two alpha chains and two gamma chains in fetal hemoglobin (Hb F). Red blood cells.

Functionally, gamma chains make up the fetal hemoglobin F, in combination with alpha chains. The protein is Hemoglobin subunit gamma (HBG) of Cephalopachus bancanus (Western tarsier).